A 337-amino-acid polypeptide reads, in one-letter code: Fructose-1,6-bisphosphatase class 1 (337 aa).

The Mg(2+) site is built by Glu94, Asp116, Leu118, and Asp119. Substrate-binding positions include 119-122 (DGSS), Asn210, and Lys276. Glu282 provides a ligand contact to Mg(2+).

It belongs to the FBPase class 1 family. Homotetramer. The cofactor is Mg(2+).

The protein resides in the cytoplasm. The catalysed reaction is beta-D-fructose 1,6-bisphosphate + H2O = beta-D-fructose 6-phosphate + phosphate. Its pathway is carbohydrate biosynthesis; gluconeogenesis. This is Fructose-1,6-bisphosphatase class 1 from Burkholderia orbicola (strain MC0-3).